The following is a 149-amino-acid chain: Extracellular protease inhibitor 1 (149 aa).

A signal peptide spans 1–16; that stretch reads MKSALLFTLVVAAVHA. 2 consecutive Kazal-like domains span residues 29–86 and 88–141; these read ESNE…SSTG and QPPS…ACVG. 2 disulfides stabilise this stretch: C35-C65 and C39-C58. N-linked (GlcNAc...) asparagine glycosylation occurs at N67. 3 cysteine pairs are disulfide-bonded: C94–C124, C98–C117, and C106–C139.

In terms of assembly, interacts with host subtilisin-like protease P69B.

It is found in the secreted. Secreted effector that interacts with and inhibits the pathogenesis-related P69B subtilisin-like serine protease of host tomato. Inhibition of host proteases by a pathogen extracellular protease inhibitor forms a specific type of defense-counterdefense mechanism between plants and microbial pathogens. The protein is Extracellular protease inhibitor 1 of Phytophthora infestans (Potato late blight agent).